The following is a 376-amino-acid chain: Uroporphyrinogen decarboxylase (376 aa).

Residues 29 to 33 (RQAGR), Asp79, Tyr155, Ser210, and His342 each bind substrate.

Belongs to the uroporphyrinogen decarboxylase family. As to quaternary structure, homodimer.

The protein resides in the cytoplasm. It carries out the reaction uroporphyrinogen III + 4 H(+) = coproporphyrinogen III + 4 CO2. The protein operates within porphyrin-containing compound metabolism; protoporphyrin-IX biosynthesis; coproporphyrinogen-III from 5-aminolevulinate: step 4/4. Catalyzes the decarboxylation of four acetate groups of uroporphyrinogen-III to yield coproporphyrinogen-III. The protein is Uroporphyrinogen decarboxylase of Paracidovorax citrulli (strain AAC00-1) (Acidovorax citrulli).